The chain runs to 267 residues: Small ribosomal subunit protein uS2 (267 aa).

The disordered stretch occupies residues 234–267 (DNAEEELAEAISQEEPSAAEELPDDMADNENEFE). Over residues 250 to 267 (SAAEELPDDMADNENEFE) the composition is skewed to acidic residues.

The protein belongs to the universal ribosomal protein uS2 family.

In Dichelobacter nodosus (strain VCS1703A), this protein is Small ribosomal subunit protein uS2.